Consider the following 464-residue polypeptide: ATP synthase subunit beta (464 aa).

153–160 provides a ligand contact to ATP; sequence GGAGVGKT.

Belongs to the ATPase alpha/beta chains family. F-type ATPases have 2 components, CF(1) - the catalytic core - and CF(0) - the membrane proton channel. CF(1) has five subunits: alpha(3), beta(3), gamma(1), delta(1), epsilon(1). CF(0) has three main subunits: a(1), b(2) and c(9-12). The alpha and beta chains form an alternating ring which encloses part of the gamma chain. CF(1) is attached to CF(0) by a central stalk formed by the gamma and epsilon chains, while a peripheral stalk is formed by the delta and b chains.

It localises to the cell membrane. It carries out the reaction ATP + H2O + 4 H(+)(in) = ADP + phosphate + 5 H(+)(out). Functionally, produces ATP from ADP in the presence of a proton gradient across the membrane. The catalytic sites are hosted primarily by the beta subunits. This chain is ATP synthase subunit beta, found in Clostridium novyi (strain NT).